Here is a 605-residue protein sequence, read N- to C-terminus: MSWGTELWDQFDSLDKHTQWGIDFLERYAKFVKERIEIEQNYAKQLRNLVKKYCPKRSSKDEEPRFTSCIAFFNILNELNDYAGQREVVAEEMAHRVYGELMRYAHDLKTERKMHLQEGRKAQQYLDMCWKQMDNSKKKFERECREAEKAQQSYERLDNDTNATKADVEKAKQQLNLRTHMADENKNEYAAQLQNFNGEQHKHFYVVIPQIYKQLQEMDERRTIKLSECYRGFADSERKVIPIISKCLEGMILAAKSVDERRDSQMVVDSFKSGFEPPGDFPFEDYSQHIYRTISDGTISAAKQESGKMDSKSTVGKAKGKLWLFGKKPKPQSPPLTPTSLFTSSTPNGSQFLTLSIEPVHYCMNEIKTGKPRIPSFRSLKRGVSLIMGPALEDFSHLPPEQRRKKLQQRIDELNRGLQKEADQKEALNKMKDVYEKNPQMGDPGSLQPKLAETMNNIDRLRMEIHKNEAWLSEVEGKTGIRGDRRHSSDINHLVTQGRESPEGSYTDDANQEVRGPPQQHGHHSEFDDEFEDDDPLPAIGHCKAIYPFDGHNEGTLAMKEGEVLYIIEEDKGDGWTRARRQNGEEGYVPTTYIDVTLEKSSKGS.

Residues 1–263 (MSWGTELWDQ…AAKSVDERRD (263 aa)) enclose the F-BAR domain. The stretch at 66–258 (FTSCIAFFNI…EGMILAAKSV (193 aa)) forms a coiled coil. The segment at 245-535 (SKCLEGMILA…EFDDEFEDDD (291 aa)) is interaction with CDC42. At Ser-295 the chain carries Phosphoserine. The stretch at 392–484 (LEDFSHLPPE…VEGKTGIRGD (93 aa)) forms a coiled coil. The REM-1 domain maps to 397-474 (HLPPEQRRKK…IHKNEAWLSE (78 aa)). Residues 482–538 (RGDRRHSSDINHLVTQGRESPEGSYTDDANQEVRGPPQQHGHHSEFDDEFEDDDPLP) are disordered. Residues Ser-488, Ser-501, and Ser-505 each carry the phosphoserine modification. Residues 522–605 (GHHSEFDDEF…VTLEKSSKGS (84 aa)) are interaction with DNM1. The span at 527-536 (FDDEFEDDDP) shows a compositional bias: acidic residues. The SH3 domain occupies 538-599 (PAIGHCKAIY…PTTYIDVTLE (62 aa)). Positions 541 to 597 (GHCKAIYPFDGHNEGTLAMKEGEVLYIIEEDKGDGWTRARRQNGEEGYVPTTYIDVT) are interaction with DNM2 and WASL. An interaction with DAAM1, DIAPH1 and DIAPH2 region spans residues 541–605 (GHCKAIYPFD…VTLEKSSKGS (65 aa)).

This sequence belongs to the FNBP1 family. As to quaternary structure, homodimerizes, the dimers can polymerize end-to-end to form filamentous structures. Interacts with GTP-bound CDC42. Interacts with DAAM1, DIAPH1, DIAPH2, DNM1, DNM2 and WASL/N-WASP. Interacts with ATG3. Interacts (via SH3 domain) with ABI1, WASF2, CDC42 and WIPF1.

The protein localises to the cytoplasm. The protein resides in the cytoskeleton. It localises to the cell cortex. Its subcellular location is the cytoplasmic vesicle. It is found in the cell membrane. Required to coordinate membrane tubulation with reorganization of the actin cytoskeleton during endocytosis. May bind to lipids such as phosphatidylinositol 4,5-bisphosphate and phosphatidylserine and promote membrane invagination and the formation of tubules. Also promotes CDC42-induced actin polymerization by activating the WASL-WASPIP complex, the predominant form of WASL/N-WASP in cells. Actin polymerization may promote the fission of membrane tubules to form endocytic vesicles. Essential for autophagy of intracellular bacterial pathogens. The polypeptide is Formin-binding protein 1-like (Fnbp1l) (Mus musculus (Mouse)).